The chain runs to 92 residues: Acylphosphatase (92 aa).

An Acylphosphatase-like domain is found at 6-92 (RAHVYVSGRV…EGVDGFEIRR (87 aa)). Active-site residues include arginine 21 and asparagine 39.

The protein belongs to the acylphosphatase family.

The enzyme catalyses an acyl phosphate + H2O = a carboxylate + phosphate + H(+). In Natronomonas pharaonis (strain ATCC 35678 / DSM 2160 / CIP 103997 / JCM 8858 / NBRC 14720 / NCIMB 2260 / Gabara) (Halobacterium pharaonis), this protein is Acylphosphatase (acyP).